Reading from the N-terminus, the 388-residue chain is Succinate--CoA ligase [ADP-forming] subunit beta (388 aa).

The 236-residue stretch at 9–244 (KEIFARYGLP…PTQESELEVK (236 aa)) folds into the ATP-grasp domain. Residues Lys46, 53–55 (GRG), Glu99, Thr102, and Glu107 contribute to the ATP site. Mg(2+) is bound by residues Asn199 and Asp213. Substrate contacts are provided by residues Asn264 and 321–323 (GIL).

Belongs to the succinate/malate CoA ligase beta subunit family. In terms of assembly, heterotetramer of two alpha and two beta subunits. Mg(2+) is required as a cofactor.

It catalyses the reaction succinate + ATP + CoA = succinyl-CoA + ADP + phosphate. The enzyme catalyses GTP + succinate + CoA = succinyl-CoA + GDP + phosphate. It participates in carbohydrate metabolism; tricarboxylic acid cycle; succinate from succinyl-CoA (ligase route): step 1/1. In terms of biological role, succinyl-CoA synthetase functions in the citric acid cycle (TCA), coupling the hydrolysis of succinyl-CoA to the synthesis of either ATP or GTP and thus represents the only step of substrate-level phosphorylation in the TCA. The beta subunit provides nucleotide specificity of the enzyme and binds the substrate succinate, while the binding sites for coenzyme A and phosphate are found in the alpha subunit. The protein is Succinate--CoA ligase [ADP-forming] subunit beta of Persephonella marina (strain DSM 14350 / EX-H1).